Here is a 165-residue protein sequence, read N- to C-terminus: ATP synthase subunit b (165 aa).

A helical membrane pass occupies residues 5 to 27 (INSTTLGNIIITLGSVFLLYYLI).

It belongs to the ATPase B chain family. In terms of assembly, F-type ATPases have 2 components, F(1) - the catalytic core - and F(0) - the membrane proton channel. F(1) has five subunits: alpha(3), beta(3), gamma(1), delta(1), epsilon(1). F(0) has three main subunits: a(1), b(2) and c(10-14). The alpha and beta chains form an alternating ring which encloses part of the gamma chain. F(1) is attached to F(0) by a central stalk formed by the gamma and epsilon chains, while a peripheral stalk is formed by the delta and b chains.

Its subcellular location is the cell membrane. In terms of biological role, f(1)F(0) ATP synthase produces ATP from ADP in the presence of a proton or sodium gradient. F-type ATPases consist of two structural domains, F(1) containing the extramembraneous catalytic core and F(0) containing the membrane proton channel, linked together by a central stalk and a peripheral stalk. During catalysis, ATP synthesis in the catalytic domain of F(1) is coupled via a rotary mechanism of the central stalk subunits to proton translocation. Functionally, component of the F(0) channel, it forms part of the peripheral stalk, linking F(1) to F(0). The polypeptide is ATP synthase subunit b (Streptococcus thermophilus (strain CNRZ 1066)).